A 595-amino-acid chain; its full sequence is Elongation factor 4 (595 aa).

Residues 2-184 (ETIRNFSIIA…TITHNIPYPK (183 aa)) form the tr-type G domain. Residues 14 to 19 (DHGKST) and 131 to 134 (NKID) contribute to the GTP site.

It belongs to the TRAFAC class translation factor GTPase superfamily. Classic translation factor GTPase family. LepA subfamily.

It localises to the cell membrane. It catalyses the reaction GTP + H2O = GDP + phosphate + H(+). Required for accurate and efficient protein synthesis under certain stress conditions. May act as a fidelity factor of the translation reaction, by catalyzing a one-codon backward translocation of tRNAs on improperly translocated ribosomes. Back-translocation proceeds from a post-translocation (POST) complex to a pre-translocation (PRE) complex, thus giving elongation factor G a second chance to translocate the tRNAs correctly. Binds to ribosomes in a GTP-dependent manner. This is Elongation factor 4 from Buchnera aphidicola subsp. Baizongia pistaciae (strain Bp).